The chain runs to 249 residues: Selenoprotein BthD (249 aa).

The disordered stretch occupies residues 1-22; sequence MPPKRNKKAEAPIAERDAGEEL. The span at 8–19 shows a compositional bias: basic and acidic residues; it reads KAEAPIAERDAG. The cysteinyl-selenocysteine (Cys-Sec); redox-active cross-link spans 34–37; sequence CRSU. Position 37 (Sec-37) is a non-standard amino acid, selenocysteine. A disordered region spans residues 122–249; sequence QQESKEQTNT…EATAGAKRRR (128 aa). Phosphoserine is present on Ser-147. The span at 175-198 shows a compositional bias: basic and acidic residues; it reads EQKSEEEPTQVDSKEAKQSKELVK. Residues 199–210 are compositionally biased toward basic residues; it reads TKRQPKAQKKQA.

As to expression, expressed in the developing salivary gland at late stages of embryogenesis. Also expressed in brain, neuroblast and wing disk.

It localises to the cytoplasm. Its subcellular location is the secreted. In terms of biological role, may be involved in a redox-related process. Required for survival and specifically for salivary gland morphogenesis. In Drosophila melanogaster (Fruit fly), this protein is Selenoprotein BthD (BthD).